Reading from the N-terminus, the 435-residue chain is Adenylosuccinate synthetase (435 aa).

GTP is bound by residues 11 to 17 (GDEGKGK) and 39 to 41 (GHT). D12 functions as the Proton acceptor in the catalytic mechanism. Positions 12 and 39 each coordinate Mg(2+). IMP-binding positions include 12-15 (DEGK), 37-40 (NAGH), T128, R142, Q223, T238, and R302. H40 serves as the catalytic Proton donor. 298 to 304 (SVTGRPR) is a binding site for substrate. Residues R304, 330–332 (KLD), and 412–414 (STG) each bind GTP.

It belongs to the adenylosuccinate synthetase family. Homodimer. The cofactor is Mg(2+).

Its subcellular location is the cytoplasm. It catalyses the reaction IMP + L-aspartate + GTP = N(6)-(1,2-dicarboxyethyl)-AMP + GDP + phosphate + 2 H(+). The protein operates within purine metabolism; AMP biosynthesis via de novo pathway; AMP from IMP: step 1/2. In terms of biological role, plays an important role in the de novo pathway of purine nucleotide biosynthesis. Catalyzes the first committed step in the biosynthesis of AMP from IMP. In Coxiella burnetii (strain Dugway 5J108-111), this protein is Adenylosuccinate synthetase.